Here is a 288-residue protein sequence, read N- to C-terminus: Acetyl-coenzyme A carboxylase carboxyl transferase subunit beta (288 aa).

One can recognise a CoA carboxyltransferase N-terminal domain in the interval 32 to 288 (LFAKCPACKH…LELHTEVENV (257 aa)). Zn(2+)-binding residues include Cys36, Cys39, Cys54, and Cys57. A C4-type zinc finger spans residues 36-57 (CPACKHTIYQKDLGKNKVCPNC).

The protein belongs to the AccD/PCCB family. As to quaternary structure, acetyl-CoA carboxylase is a heterohexamer composed of biotin carboxyl carrier protein (AccB), biotin carboxylase (AccC) and two subunits each of ACCase subunit alpha (AccA) and ACCase subunit beta (AccD). It depends on Zn(2+) as a cofactor.

It is found in the cytoplasm. The enzyme catalyses N(6)-carboxybiotinyl-L-lysyl-[protein] + acetyl-CoA = N(6)-biotinyl-L-lysyl-[protein] + malonyl-CoA. The protein operates within lipid metabolism; malonyl-CoA biosynthesis; malonyl-CoA from acetyl-CoA: step 1/1. Its function is as follows. Component of the acetyl coenzyme A carboxylase (ACC) complex. Biotin carboxylase (BC) catalyzes the carboxylation of biotin on its carrier protein (BCCP) and then the CO(2) group is transferred by the transcarboxylase to acetyl-CoA to form malonyl-CoA. The polypeptide is Acetyl-coenzyme A carboxylase carboxyl transferase subunit beta (Lactococcus lactis subsp. cremoris (strain SK11)).